We begin with the raw amino-acid sequence, 313 residues long: R2-like ligand binding oxidase (313 aa).

Mn(2+) contacts are provided by E68, E101, and H104. A cross-link (3-(O4'-tyrosyl)-valine (Val-Tyr)) is located at residues 71 to 162 (VTQDIQPFMS…AAQVRASVTY (92 aa)). E101 serves as a coordination point for Fe cation. Fe cation is bound by residues E167, E202, and H205.

The protein belongs to the ribonucleoside diphosphate reductase small chain family. R2-like ligand binding oxidase subfamily. As to quaternary structure, homodimer. Requires Fe cation as cofactor. Mn(2+) serves as cofactor.

In terms of biological role, probable oxidase that might be involved in lipid metabolism. The sequence is that of R2-like ligand binding oxidase from Mycobacteroides abscessus (strain ATCC 19977 / DSM 44196 / CCUG 20993 / CIP 104536 / JCM 13569 / NCTC 13031 / TMC 1543 / L948) (Mycobacterium abscessus).